The sequence spans 800 residues: Phenylalanine--tRNA ligase beta subunit (800 aa).

The tRNA-binding domain occupies 39–154; the sequence is TKDIKNLVVG…ESQVPGTDAL (116 aa). In terms of domain architecture, B5 spans 408–483; that stretch reads AFITPIDITA…RIYGYDDIPS (76 aa). Residues Asp-461, Asp-467, Glu-470, and Glu-471 each contribute to the Mg(2+) site. The region spanning 708-800 is the FDX-ACB domain; that stretch reads PRFPGMSRDI…ALIEQGAVIR (93 aa).

The protein belongs to the phenylalanyl-tRNA synthetase beta subunit family. Type 1 subfamily. Tetramer of two alpha and two beta subunits. It depends on Mg(2+) as a cofactor.

It localises to the cytoplasm. It carries out the reaction tRNA(Phe) + L-phenylalanine + ATP = L-phenylalanyl-tRNA(Phe) + AMP + diphosphate + H(+). The chain is Phenylalanine--tRNA ligase beta subunit from Staphylococcus aureus (strain MSSA476).